The chain runs to 98 residues: NADH-ubiquinone oxidoreductase chain 4L (98 aa).

A run of 3 helical transmembrane segments spans residues 1 to 21 (MHYI…GALL), 29 to 49 (SLLC…LIAL), and 61 to 81 (IILL…LVMV).

It belongs to the complex I subunit 4L family. In terms of assembly, core subunit of respiratory chain NADH dehydrogenase (Complex I) which is composed of 45 different subunits.

It localises to the mitochondrion inner membrane. It catalyses the reaction a ubiquinone + NADH + 5 H(+)(in) = a ubiquinol + NAD(+) + 4 H(+)(out). In terms of biological role, core subunit of the mitochondrial membrane respiratory chain NADH dehydrogenase (Complex I) which catalyzes electron transfer from NADH through the respiratory chain, using ubiquinone as an electron acceptor. Part of the enzyme membrane arm which is embedded in the lipid bilayer and involved in proton translocation. The protein is NADH-ubiquinone oxidoreductase chain 4L (MT-ND4L) of Procavia capensis (Rock hyrax).